Here is a 324-residue protein sequence, read N- to C-terminus: AT-hook motif nuclear-localized protein 24 (324 aa).

Residues 1–12 (MDPVQSHGSQSS) are compositionally biased toward polar residues. 2 disordered regions span residues 1–122 (MDPV…KPPI) and 262–324 (MQTP…RPPY). Low complexity predominate over residues 24–33 (LHLQQQQQEF). Over residues 69 to 79 (NIDNIANNSGS) the composition is skewed to polar residues. Residues 88–99 (GGSGEGGGGSGG) show a composition bias toward gly residues. Positions 105 to 117 (RRPRGRPAGSKNK) form a DNA-binding region, a.T hook. The PPC domain maps to 129 to 268 (ANALRTHVME…EDEMQTPVHG (140 aa)). The span at 280–297 (MMGQQLQHQQQAMSGHQG) shows a compositional bias: low complexity. Residues 304–318 (GSVQLQQQHDQSYWS) show a composition bias toward polar residues.

It localises to the nucleus. In terms of biological role, transcription factor that specifically binds AT-rich DNA sequences related to the nuclear matrix attachment regions (MARs). This is AT-hook motif nuclear-localized protein 24 from Arabidopsis thaliana (Mouse-ear cress).